A 146-amino-acid chain; its full sequence is Large ribosomal subunit protein uL15 (146 aa).

The tract at residues 1–51 (MQLNTLKPAEGSKKNRRRVGRGIGSGLGKTAGRGHKGQKSRSGGFHKVGFE) is disordered. Positions 21-31 (RGIGSGLGKTA) are enriched in gly residues.

The protein belongs to the universal ribosomal protein uL15 family. In terms of assembly, part of the 50S ribosomal subunit.

Its function is as follows. Binds to the 23S rRNA. This chain is Large ribosomal subunit protein uL15, found in Polynucleobacter asymbioticus (strain DSM 18221 / CIP 109841 / QLW-P1DMWA-1) (Polynucleobacter necessarius subsp. asymbioticus).